The primary structure comprises 472 residues: 3-isopropylmalate dehydratase large subunit (472 aa).

3 residues coordinate [4Fe-4S] cluster: Cys-352, Cys-413, and Cys-416.

Belongs to the aconitase/IPM isomerase family. LeuC type 1 subfamily. In terms of assembly, heterodimer of LeuC and LeuD. Requires [4Fe-4S] cluster as cofactor.

It catalyses the reaction (2R,3S)-3-isopropylmalate = (2S)-2-isopropylmalate. It functions in the pathway amino-acid biosynthesis; L-leucine biosynthesis; L-leucine from 3-methyl-2-oxobutanoate: step 2/4. Catalyzes the isomerization between 2-isopropylmalate and 3-isopropylmalate, via the formation of 2-isopropylmaleate. The chain is 3-isopropylmalate dehydratase large subunit from Pseudomonas fluorescens (strain ATCC BAA-477 / NRRL B-23932 / Pf-5).